Consider the following 289-residue polypeptide: Acetyl-coenzyme A carboxylase carboxyl transferase subunit beta (289 aa).

The CoA carboxyltransferase N-terminal domain occupies 28–289; the sequence is VMTKCPKCKK…QGGEMAVWQS (262 aa). Zn(2+)-binding residues include C32, C35, C51, and C54. The C4-type zinc finger occupies 32-54; sequence CPKCKKIMYTKELLKNLKVCVNC.

It belongs to the AccD/PCCB family. Acetyl-CoA carboxylase is a heterohexamer composed of biotin carboxyl carrier protein (AccB), biotin carboxylase (AccC) and two subunits each of ACCase subunit alpha (AccA) and ACCase subunit beta (AccD). Zn(2+) serves as cofactor.

Its subcellular location is the cytoplasm. It carries out the reaction N(6)-carboxybiotinyl-L-lysyl-[protein] + acetyl-CoA = N(6)-biotinyl-L-lysyl-[protein] + malonyl-CoA. The protein operates within lipid metabolism; malonyl-CoA biosynthesis; malonyl-CoA from acetyl-CoA: step 1/1. Component of the acetyl coenzyme A carboxylase (ACC) complex. Biotin carboxylase (BC) catalyzes the carboxylation of biotin on its carrier protein (BCCP) and then the CO(2) group is transferred by the transcarboxylase to acetyl-CoA to form malonyl-CoA. This Bacillus cereus (strain AH187) protein is Acetyl-coenzyme A carboxylase carboxyl transferase subunit beta.